Reading from the N-terminus, the 79-residue chain is DNA gyrase inhibitor YacG (79 aa).

Positions 7, 10, 26, and 30 each coordinate Zn(2+).

The protein belongs to the DNA gyrase inhibitor YacG family. In terms of assembly, interacts with GyrB. It depends on Zn(2+) as a cofactor.

Functionally, inhibits all the catalytic activities of DNA gyrase by preventing its interaction with DNA. Acts by binding directly to the C-terminal domain of GyrB, which probably disrupts DNA binding by the gyrase. This chain is DNA gyrase inhibitor YacG, found in Shewanella pealeana (strain ATCC 700345 / ANG-SQ1).